Reading from the N-terminus, the 176-residue chain is NAD(P)H-quinone oxidoreductase subunit 6, chloroplastic (176 aa).

The next 5 membrane-spanning stretches (helical) occupy residues 10–30 (FLLV…VLLP), 32–52 (PIFS…LYIL), 61–81 (AQLL…VMFM), 92–112 (LWTV…FSLM), and 152–172 (FFLP…GAIS).

Belongs to the complex I subunit 6 family. As to quaternary structure, NDH is composed of at least 16 different subunits, 5 of which are encoded in the nucleus.

It localises to the plastid. The protein resides in the chloroplast thylakoid membrane. It catalyses the reaction a plastoquinone + NADH + (n+1) H(+)(in) = a plastoquinol + NAD(+) + n H(+)(out). It carries out the reaction a plastoquinone + NADPH + (n+1) H(+)(in) = a plastoquinol + NADP(+) + n H(+)(out). In terms of biological role, NDH shuttles electrons from NAD(P)H:plastoquinone, via FMN and iron-sulfur (Fe-S) centers, to quinones in the photosynthetic chain and possibly in a chloroplast respiratory chain. The immediate electron acceptor for the enzyme in this species is believed to be plastoquinone. Couples the redox reaction to proton translocation, and thus conserves the redox energy in a proton gradient. The sequence is that of NAD(P)H-quinone oxidoreductase subunit 6, chloroplastic (ndhG) from Barbarea verna (Land cress).